The chain runs to 434 residues: MAVAVEITRSEVLRPSETLAAGGGGKRSQLTVFDRAAMDWYIPAVFAWDGAAAPSNDEVKGGLAAVLARYPHLAGRFDVDERGRRCFNLNNAGVRVLEATVAADLADALAHDVAAHVNELYPKADMENADEPVFQVQLTRYACGGLVIGTACNHQVSDGQSMSFFYVAWAAAVRSAGATLPTPFVDRAAIAVPRGPPAPAFDHRNIEFKGEHSWTHSYGSLPLERIRNLAVHFPDEFVAGLKSHVGARCSTFQCLLAHAWKKITAARDLSPEEYTQVRVAVNCRGRASPAVPMDYFGNMVLWAFPRMRVRDLLSSSYAAVVGVIRNAVARVDEQYIQSFVDFGEVAAGDELTPTAAPPGTVFCPDLEVDSWLGFRFHDLDFGRGPPCAFLPPDVPVEGLLIFVPSCAAKGGVEMFMALDDVHVEAFRQICYSMD.

Active-site proton acceptor residues include His-154 and Asp-380.

Belongs to the plant acyltransferase family.

In terms of biological role, hydroxycinnamoyl transferase that catalyzes the transfer of an acyl from p-coumaryol-CoA to tryptamine, to produce coumaroyl tryptamine. Serotonin and tyramine serve as acyl acceptors in vitro. Can use caffeoyl-CoA, and to a lesser extent feruloyl-CoA, as acyl donors. In Oryza sativa subsp. japonica (Rice), this protein is Tryptamine hydroxycinnamoyltransferase 2.